The following is a 418-amino-acid chain: UDP-N-acetylglucosamine 1-carboxyvinyltransferase 2 (418 aa).

Residue 22 to 23 (KN) participates in phosphoenolpyruvate binding. UDP-N-acetyl-alpha-D-glucosamine is bound at residue Arg-92. Residue Cys-116 is the Proton donor of the active site. Position 116 is a 2-(S-cysteinyl)pyruvic acid O-phosphothioketal (Cys-116). UDP-N-acetyl-alpha-D-glucosamine-binding residues include Asp-305 and Ile-327.

It belongs to the EPSP synthase family. MurA subfamily.

It is found in the cytoplasm. The enzyme catalyses phosphoenolpyruvate + UDP-N-acetyl-alpha-D-glucosamine = UDP-N-acetyl-3-O-(1-carboxyvinyl)-alpha-D-glucosamine + phosphate. It participates in cell wall biogenesis; peptidoglycan biosynthesis. Cell wall formation. Adds enolpyruvyl to UDP-N-acetylglucosamine. This chain is UDP-N-acetylglucosamine 1-carboxyvinyltransferase 2, found in Mesorhizobium japonicum (strain LMG 29417 / CECT 9101 / MAFF 303099) (Mesorhizobium loti (strain MAFF 303099)).